The chain runs to 201 residues: 3-isopropylmalate dehydratase small subunit (201 aa).

This sequence belongs to the LeuD family. LeuD type 1 subfamily. Heterodimer of LeuC and LeuD.

The enzyme catalyses (2R,3S)-3-isopropylmalate = (2S)-2-isopropylmalate. The protein operates within amino-acid biosynthesis; L-leucine biosynthesis; L-leucine from 3-methyl-2-oxobutanoate: step 2/4. Its function is as follows. Catalyzes the isomerization between 2-isopropylmalate and 3-isopropylmalate, via the formation of 2-isopropylmaleate. This is 3-isopropylmalate dehydratase small subunit from Cereibacter sphaeroides (strain KD131 / KCTC 12085) (Rhodobacter sphaeroides).